Here is a 254-residue protein sequence, read N- to C-terminus: Ciliary microtubule associated protein 1A (254 aa).

STPGR repeat units follow at residues 180-205 (PGPA…MAAR) and 216-241 (PGPG…FGIK). The segment at 207–228 (EPPGDKTLKPGPGAHSPEKVTL) is disordered.

This sequence belongs to the CIMAP family. As to quaternary structure, microtubule inner protein component of sperm flagellar doublet microtubules. In terms of tissue distribution, testis-specific (at protein level). Expression restricted to the germ cell fraction, absent in somatic cell fractions such as Sertoli and Leydig cells. Expression detected in the third week postpartum (23 days) after haploid germ cells developed, expression increased with age. Expressed in the tails of elongated spermatids sticking out toward the tubular lumen, and in cytoplasmic droplets still attached to the spermatid tail membrane. Expressed in the tails of mature sperm, from the connecting piece proximal to the head, along the middle and principal pieces, down to the distal end piece.

The protein resides in the cytoplasm. It is found in the cytoskeleton. Its subcellular location is the flagellum axoneme. Its function is as follows. Outer dense fibers are filamentous structures located on the outside of the axoneme in the midpiece and principal piece of the mammalian sperm tail. May help to maintain the passive elastic structures and elastic recoil of the sperm tail. This chain is Ciliary microtubule associated protein 1A (Cimap1a), found in Mus musculus (Mouse).